We begin with the raw amino-acid sequence, 218 residues long: Cytochrome c biogenesis ATP-binding export protein CcmA (218 aa).

One can recognise an ABC transporter domain in the interval 2 to 217; it reads LEAKNLTCIR…KSCLSACCAV (216 aa). 34-41 is a binding site for ATP; the sequence is GPNGAGKT.

This sequence belongs to the ABC transporter superfamily. CcmA exporter (TC 3.A.1.107) family. In terms of assembly, the complex is composed of two ATP-binding proteins (CcmA) and two transmembrane proteins (CcmB).

The protein localises to the cell inner membrane. It carries out the reaction heme b(in) + ATP + H2O = heme b(out) + ADP + phosphate + H(+). Functionally, part of the ABC transporter complex CcmAB involved in the biogenesis of c-type cytochromes; once thought to export heme, this seems not to be the case, but its exact role is uncertain. Responsible for energy coupling to the transport system. This is Cytochrome c biogenesis ATP-binding export protein CcmA from Yersinia pseudotuberculosis serotype I (strain IP32953).